A 54-amino-acid polypeptide reads, in one-letter code: ATP synthase protein 8 (54 aa).

The helical transmembrane segment at 9–29 threads the bilayer; it reads WIINFFIVWTADFTLLIVLSI.

The protein belongs to the ATPase protein 8 family. As to quaternary structure, F-type ATPases have 2 components, CF(1) - the catalytic core - and CF(0) - the membrane proton channel.

The protein resides in the mitochondrion membrane. Functionally, mitochondrial membrane ATP synthase (F(1)F(0) ATP synthase or Complex V) produces ATP from ADP in the presence of a proton gradient across the membrane which is generated by electron transport complexes of the respiratory chain. F-type ATPases consist of two structural domains, F(1) - containing the extramembraneous catalytic core and F(0) - containing the membrane proton channel, linked together by a central stalk and a peripheral stalk. During catalysis, ATP synthesis in the catalytic domain of F(1) is coupled via a rotary mechanism of the central stalk subunits to proton translocation. Part of the complex F(0) domain. Minor subunit located with subunit a in the membrane. The polypeptide is ATP synthase protein 8 (MT-ATP8) (Arbacia lixula (Black urchin)).